A 463-amino-acid polypeptide reads, in one-letter code: Chaperone SurA (463 aa).

The signal sequence occupies residues 1–25 (MTRYFSIVLSLLLAVSCVFLPVASA). 2 PpiC domains span residues 175 to 277 (GAQY…KLVE) and 291 to 390 (ATEY…QRLG). Residues 439–463 (ADDHHTPSAAVTPATGAVLPAATKH) are disordered.

It localises to the periplasm. It catalyses the reaction [protein]-peptidylproline (omega=180) = [protein]-peptidylproline (omega=0). Functionally, chaperone involved in the correct folding and assembly of outer membrane proteins. Recognizes specific patterns of aromatic residues and the orientation of their side chains, which are found more frequently in integral outer membrane proteins. May act in both early periplasmic and late outer membrane-associated steps of protein maturation. The protein is Chaperone SurA of Xylella fastidiosa (strain Temecula1 / ATCC 700964).